A 141-amino-acid chain; its full sequence is Holo-[acyl-carrier-protein] synthase (141 aa).

Mg(2+) is bound by residues Asp-8 and Glu-63.

The protein belongs to the P-Pant transferase superfamily. AcpS family. Mg(2+) serves as cofactor.

The protein localises to the cytoplasm. The catalysed reaction is apo-[ACP] + CoA = holo-[ACP] + adenosine 3',5'-bisphosphate + H(+). Transfers the 4'-phosphopantetheine moiety from coenzyme A to a Ser of acyl-carrier-protein. The sequence is that of Holo-[acyl-carrier-protein] synthase from Rhodospirillum centenum (strain ATCC 51521 / SW).